Here is a 338-residue protein sequence, read N- to C-terminus: Lipoate-protein ligase A (338 aa).

The region spanning 29 to 216 (PATQRVLFLW…AFFAHYGERV (188 aa)) is the BPL/LPL catalytic domain. ATP contacts are provided by residues R71, 76-79 (GAVF), and K134. Residue K134 coordinates (R)-lipoate.

This sequence belongs to the LplA family. In terms of assembly, monomer.

It localises to the cytoplasm. The catalysed reaction is L-lysyl-[lipoyl-carrier protein] + (R)-lipoate + ATP = N(6)-[(R)-lipoyl]-L-lysyl-[lipoyl-carrier protein] + AMP + diphosphate + H(+). It functions in the pathway protein modification; protein lipoylation via exogenous pathway; protein N(6)-(lipoyl)lysine from lipoate: step 1/2. Its pathway is protein modification; protein lipoylation via exogenous pathway; protein N(6)-(lipoyl)lysine from lipoate: step 2/2. Its function is as follows. Catalyzes both the ATP-dependent activation of exogenously supplied lipoate to lipoyl-AMP and the transfer of the activated lipoyl onto the lipoyl domains of lipoate-dependent enzymes. This Salmonella agona (strain SL483) protein is Lipoate-protein ligase A.